Consider the following 1020-residue polypeptide: Contactin-1 (1020 aa).

An N-terminal signal peptide occupies residues 1–20 (MKMPLLVSHLLLISLTSCLG). Ig-like C2-type domains follow at residues 41–131 (PIFE…ATLS), 137–223 (PFPP…KSVF), 241–326 (PADI…ARIY), 331–407 (PEWV…AELK), 413–500 (PTFE…GTLV), and 504–603 (PTRI…LVVR). 2 disulfides stabilise this stretch: cysteine 65–cysteine 114 and cysteine 158–cysteine 211. Residues asparagine 208 and asparagine 258 are each glycosylated (N-linked (GlcNAc...) asparagine). Cysteine 263 and cysteine 310 are disulfide-bonded. An N-linked (GlcNAc...) asparagine glycan is attached at asparagine 338. Disulfide bonds link cysteine 352-cysteine 391 and cysteine 436-cysteine 484. Asparagine 457, asparagine 473, asparagine 494, and asparagine 521 each carry an N-linked (GlcNAc...) asparagine glycan. A disulfide bridge links cysteine 526 with cysteine 585. A glycan (N-linked (GlcNAc...) asparagine) is linked at asparagine 593. Fibronectin type-III domains lie at 608–706 (PPGG…TDGA), 711–808 (APSD…SAQD), 813–908 (APTE…APPS), and 909–1002 (QPPR…TLSS). Positions 695-719 (SIPSNRIKTDGAAPNVAPSDVGGGG) are disordered. Residue asparagine 935 is glycosylated (N-linked (GlcNAc...) asparagine). The GPI-anchor amidated serine moiety is linked to residue serine 1001. Residues 1002 to 1020 (SSLLSLLLPSLGFLVYSEF) constitute a propeptide, removed in mature form.

Belongs to the immunoglobulin superfamily. Contactin family. In terms of assembly, monomer. Interacts with CNTNAP1 in cis form. Binds to the carbonic-anhydrase like domain of PTPRZ1. Interacts with NOTCH1 and TNR. Detected in a complex with NRCAM and PTPRB. Interacts with TASOR. Expressed in the ovary and in Sertoli cells of the testis.

Its subcellular location is the cell membrane. Contactins mediate cell surface interactions during nervous system development. Involved in the formation of paranodal axo-glial junctions in myelinated peripheral nerves and in the signaling between axons and myelinating glial cells via its association with CNTNAP1. Participates in oligodendrocytes generation by acting as a ligand of NOTCH1. Its association with NOTCH1 promotes NOTCH1 activation through the released notch intracellular domain (NICD) and subsequent translocation to the nucleus. Interaction with TNR induces a repulsion of neurons and an inhibition of neurite outgrowth. The sequence is that of Contactin-1 (Cntn1) from Mus musculus (Mouse).